A 401-amino-acid chain; its full sequence is Argininosuccinate synthase (401 aa).

Residue 9–17 (AYSGGLDTS) coordinates ATP. Tyrosine 86 serves as a coordination point for L-citrulline. Glycine 116 lines the ATP pocket. Threonine 118, asparagine 122, and aspartate 123 together coordinate L-aspartate. Asparagine 122 provides a ligand contact to L-citrulline. Residues arginine 126, serine 174, serine 183, glutamate 259, and tyrosine 271 each coordinate L-citrulline.

Belongs to the argininosuccinate synthase family. Type 1 subfamily. Homotetramer.

The protein resides in the cytoplasm. It carries out the reaction L-citrulline + L-aspartate + ATP = 2-(N(omega)-L-arginino)succinate + AMP + diphosphate + H(+). It functions in the pathway amino-acid biosynthesis; L-arginine biosynthesis; L-arginine from L-ornithine and carbamoyl phosphate: step 2/3. This Bacillus thuringiensis (strain Al Hakam) protein is Argininosuccinate synthase.